The sequence spans 699 residues: Fervidolysin (699 aa).

The first 21 residues, 1 to 21, serve as a signal peptide directing secretion; the sequence is MRKVLLIASIVALILALFSCA. Residues 22-149 constitute a propeptide that is removed on maturation; sequence NPSFEPRSKA…MYKIRKPGLN (128 aa). Glutamate 157 serves as a coordination point for Ca(2+). The Peptidase S8 domain maps to 163–465; that stretch reads LWGLEAIGVT…YGLVKLDAAL (303 aa). Aspartate 190 acts as the Charge relay system in catalysis. Aspartate 199 provides a ligand contact to Ca(2+). The active-site Charge relay system is the histidine 228. Residues lysine 239, aspartate 241, lysine 243, and isoleucine 245 each coordinate Ca(2+). Serine 409 serves as the catalytic Charge relay system.

The protein belongs to the peptidase S8 family. In terms of processing, undergoes auto-proteolytic processing. Once cleaved, the propeptide can remain associated with the protease and blocks its activity. The physiological activation of fervidolysin is proposed to be achieved through the stepwise removal of the propeptide accomplished by several proteolytic cleavages that may not be autolytic.

Its subcellular location is the cell surface. Its activity is regulated as follows. Is inhibited by phenylmethylsulfonyl fluoride and 3,4-dichloroisocoumarin. EDTA and iodoacetate (1 to 5 mM) have only little effect on the enzyme activity. Functionally, protease able to degrade keratin into peptides. Is responsible for keratinolysis by F.pennivorans, which allows this bacterium to grow on native feathers. The protein is Fervidolysin of Fervidobacterium pennivorans.